The chain runs to 161 residues: SsrA-binding protein (161 aa).

Belongs to the SmpB family.

It localises to the cytoplasm. In terms of biological role, required for rescue of stalled ribosomes mediated by trans-translation. Binds to transfer-messenger RNA (tmRNA), required for stable association of tmRNA with ribosomes. tmRNA and SmpB together mimic tRNA shape, replacing the anticodon stem-loop with SmpB. tmRNA is encoded by the ssrA gene; the 2 termini fold to resemble tRNA(Ala) and it encodes a 'tag peptide', a short internal open reading frame. During trans-translation Ala-aminoacylated tmRNA acts like a tRNA, entering the A-site of stalled ribosomes, displacing the stalled mRNA. The ribosome then switches to translate the ORF on the tmRNA; the nascent peptide is terminated with the 'tag peptide' encoded by the tmRNA and targeted for degradation. The ribosome is freed to recommence translation, which seems to be the essential function of trans-translation. The protein is SsrA-binding protein of Vibrio vulnificus (strain YJ016).